A 165-amino-acid chain; its full sequence is RxLR effector protein PITG_09218 (165 aa).

The first 24 residues, 1–24 (MRFSAFLTLLLVAFVASCSTFASA), serve as a signal peptide directing secretion. Residues 31–57 (RRLRADAAPVPVNKDNVAKLAGGFLEK) carry the RxLR-dEER motif. The chain crosses the membrane as a helical span at residues 129–149 (VTLGATVAGFAIYGAYKALFD).

This sequence belongs to the RxLR effector family.

Its subcellular location is the secreted. The protein resides in the host mitochondrion membrane. The protein localises to the host endoplasmic reticulum membrane. Its function is as follows. Effector that enhances P.infestans colonization of Nicotiana benthamiana leaves. In Phytophthora infestans (strain T30-4) (Potato late blight agent), this protein is RxLR effector protein PITG_09218.